The primary structure comprises 224 residues: Ribose-5-phosphate isomerase A (224 aa).

Substrate-binding positions include 32-35 (TGST), 85-88 (DGAD), and 98-101 (KGGG). The active-site Proton acceptor is the Glu-107. Lys-125 is a binding site for substrate.

The protein belongs to the ribose 5-phosphate isomerase family. As to quaternary structure, homodimer.

The enzyme catalyses aldehydo-D-ribose 5-phosphate = D-ribulose 5-phosphate. The protein operates within carbohydrate degradation; pentose phosphate pathway; D-ribose 5-phosphate from D-ribulose 5-phosphate (non-oxidative stage): step 1/1. In terms of biological role, catalyzes the reversible conversion of ribose-5-phosphate to ribulose 5-phosphate. In Pseudomonas entomophila (strain L48), this protein is Ribose-5-phosphate isomerase A.